The primary structure comprises 1481 residues: Cystic fibrosis transmembrane conductance regulator (1481 aa).

Over 1–77 (MQRSPLEKAS…KLINALRRCF (77 aa)) the chain is Cytoplasmic. A helical transmembrane segment spans residues 78–98 (FWRFMFYGIILYLGEVTKAVQ). Residues 81 to 365 (FMFYGIILYL…WAVQTWYDSL (285 aa)) enclose the ABC transmembrane type-1 1 domain. Topologically, residues 99 to 122 (PLLLGRIIASYDPDNKVERSIAIY) are extracellular. The chain crosses the membrane as a helical span at residues 123 to 146 (LGIGLCLLFIVRTLLLHPAIFGLH). At 147–195 (HIGMQMRIAMFSLIYKKTLKLSSRVLDKISIGQLVSLLSNNLNKFDEGL) the chain is on the cytoplasmic side. A helical membrane pass occupies residues 196–216 (ALAHFVWIAPLQVTLLMGLLW). The Extracellular portion of the chain corresponds to 217–222 (DLLQAF). A helical transmembrane segment spans residues 223-243 (TFCGLAFLVVLALLQAGLGKM). At 244–298 (MMKYRDQRAGKINERLVITSEMIENIQSVKAYCWEEAMEKIIENLRQTELKLTRK) the chain is on the cytoplasmic side. A helical membrane pass occupies residues 299 to 319 (AAYVRYLNSSAFFFSGFFVVF). The Extracellular segment spans residues 320–339 (LSVLPYALLKGIILRKIFTT). A helical transmembrane segment spans residues 340–358 (ISFCIVLRMAVTRQFPWAV). At 359 to 858 (QTWYDSLGAI…YLRYITVHKS (500 aa)) the chain is on the cytoplasmic side. Residues Trp401, 457-464 (GSTGAGKT), and Gln492 each bind ATP. Residues 421–645 (ISNCDTSLFF…RPDFSSKLMG (225 aa)) form the ABC transporter 1 domain. The S-palmitoyl cysteine moiety is linked to residue Cys523. Phosphoserine occurs at positions 548 and 659. Positions 653 to 831 (TAERRNSIIT…EEINEEDLRD (179 aa)) are disordered R region. At Ser669 the chain carries Phosphoserine; by PKA. Ser685 is subject to Phosphoserine. Residue Lys687 forms a Glycyl lysine isopeptide (Lys-Gly) (interchain with G-Cter in ubiquitin) linkage. Phosphoserine occurs at positions 699 and 711. Thr716 is modified (phosphothreonine). Residues Ser736, Ser767, Ser790, Ser795, and Ser813 each carry the phosphoserine modification. A helical membrane pass occupies residues 859-879 (LMFVLIWCLVVFLVEVAASLV). The 297-residue stretch at 859 to 1155 (LMFVLIWCLV…AVNSSIDVDS (297 aa)) folds into the ABC transmembrane type-1 2 domain. At 880-918 (VLCLFPKILLQDKGNSTKNASNSYAVIITSTSSYYIFYI) the chain is on the extracellular side. Asn894 and Asn898 each carry an N-linked (GlcNAc...) asparagine glycan. The discontinuously helical transmembrane segment at 919–939 (YVGVADTLLALGLFRGLPLVH) threads the bilayer. Residues 940-990 (TLITVSKTLHHKMLQSVLQAPMSTLNTLKTGGILNRFSKDIAVLDDLLPLT) lie on the Cytoplasmic side of the membrane. The chain crosses the membrane as a helical span at residues 991–1011 (IFDFIQLLLIVIGAVVVVSVL). At 1012-1013 (QP) the chain is on the extracellular side. The chain crosses the membrane as a helical span at residues 1014 to 1034 (YIFLATVPVIAAFILLRGYFL). The Cytoplasmic segment spans residues 1035-1095 (HTSQQLKQLE…TANWFLYLST (61 aa)). The chain crosses the membrane as a helical span at residues 1096-1116 (LRWFQMRIEMIFVIFFIAVTF). Residues 1117–1130 (ISILTTGEGEGRVG) lie on the Extracellular side of the membrane. A helical transmembrane segment spans residues 1131 to 1151 (IILTLAMNIMGTLQWAVNSSI). The Cytoplasmic segment spans residues 1152-1481 (DVDSLMRSVS…TEEEVQETKL (330 aa)). In terms of domain architecture, ABC transporter 2 spans 1211–1444 (MTVKDLTAKY…KSLFRQAISP (234 aa)). ATP contacts are provided by residues Tyr1220 and 1245–1252 (GRTGSGKS). The tract at residues 1387-1481 (RTLKQAFADC…TEEEVQETKL (95 aa)) is interaction with GORASP2. A lipid anchor (S-palmitoyl cysteine) is attached at Cys1396. Residue Ser1457 is modified to Phosphoserine. The PDZ-binding motif lies at 1479–1481 (TKL).

The protein belongs to the ABC transporter superfamily. ABCC family. CFTR transporter (TC 3.A.1.202) subfamily. As to quaternary structure, monomer; does not require oligomerization for channel activity. May form oligomers in the membrane. Interacts with SLC26A3, SLC26A6 and NHERF1. Interacts with SHANK2. Interacts with MYO6. Interacts (via C-terminus) with GOPC (via PDZ domain); this promotes CFTR internalization and thereby decreases channel activity. Interacts with SLC4A7 through NHERF1. Found in a complex with MYO5B and RAB11A. Interacts with ANO1. Interacts with SLC26A8. Interacts with AHCYL1; the interaction increases CFTR activity. Interacts with CSE1L. The core-glycosylated form interacts with GORASP2 (via PDZ GRASP-type 1 domain) in respone to ER stress. Interacts with MARCHF2; the interaction leads to CFTR ubiqtuitination and degradation. Interacts with ADGRG2. Post-translationally, N-glycosylated. In terms of processing, phosphorylated; cAMP treatment promotes phosphorylation and activates the channel. Dephosphorylation decreases the ATPase activity (in vitro). Phosphorylation at PKA sites activates the channel. Phosphorylation at PKC sites enhances the response to phosphorylation by PKA. Phosphorylated by AMPK; this inhibits channel activity. Ubiquitinated, leading to its degradation in the lysosome. Deubiquitination by USP10 in early endosomes enhances its endocytic recycling to the cell membrane. Ubiquitinated by RNF185 during ER stress. Ubiquitinated by MARCHF2.

Its subcellular location is the apical cell membrane. It localises to the early endosome membrane. The protein resides in the cell membrane. It is found in the recycling endosome membrane. The protein localises to the endoplasmic reticulum membrane. Its subcellular location is the nucleus. It carries out the reaction ATP + H2O + closed Cl(-) channel = ADP + phosphate + open Cl(-) channel.. It catalyses the reaction chloride(in) = chloride(out). The catalysed reaction is hydrogencarbonate(in) = hydrogencarbonate(out). The enzyme catalyses ATP + H2O = ADP + phosphate + H(+). Epithelial ion channel that plays an important role in the regulation of epithelial ion and water transport and fluid homeostasis. Mediates the transport of chloride ions across the cell membrane. Possesses an intrinsic ATPase activity and utilizes ATP to gate its channel; the passive flow of anions through the channel is gated by cycles of ATP binding and hydrolysis by the ATP-binding domains. The ion channel is also permeable to HCO(3)(-); selectivity depends on the extracellular chloride concentration. Exerts its function also by modulating the activity of other ion channels and transporters. Contributes to the regulation of the pH and the ion content of the epithelial fluid layer. Modulates the activity of the epithelial sodium channel (ENaC) complex, in part by regulating the cell surface expression of the ENaC complex. May regulate bicarbonate secretion and salvage in epithelial cells by regulating the transporter SLC4A7. Can inhibit the chloride channel activity of ANO1. Plays a role in the chloride and bicarbonate homeostasis during sperm epididymal maturation and capacitation. The polypeptide is Cystic fibrosis transmembrane conductance regulator (Ovis aries (Sheep)).